The primary structure comprises 150 residues: Large ribosomal subunit protein uL13 (150 aa).

It belongs to the universal ribosomal protein uL13 family. In terms of assembly, part of the 50S ribosomal subunit.

This protein is one of the early assembly proteins of the 50S ribosomal subunit, although it is not seen to bind rRNA by itself. It is important during the early stages of 50S assembly. This Chlorobaculum parvum (strain DSM 263 / NCIMB 8327) (Chlorobium vibrioforme subsp. thiosulfatophilum) protein is Large ribosomal subunit protein uL13.